The following is a 425-amino-acid chain: Formyl-CoA:oxalate CoA-transferase (425 aa).

Residues glutamine 17–serine 18, arginine 38, leucine 72–lysine 75, asparagine 96–glycine 98, arginine 104, and lysine 136–glutamate 139 each bind CoA. Aspartate 168 serves as the catalytic Nucleophile. Glycine 247–glutamine 249 provides a ligand contact to substrate.

The protein belongs to the CoA-transferase III family. Frc subfamily. Homodimer.

The enzyme catalyses formyl-CoA + oxalate = oxalyl-CoA + formate. The protein operates within metabolic intermediate degradation; oxalate degradation; CO(2) and formate from oxalate: step 1/2. Its function is as follows. Involved in the catabolism of oxalate and in the adapatation to low pH via the induction of the oxalate-dependent acid tolerance response (ATR). Catalyzes the transfer of the CoA moiety from formyl-CoA to oxalate. This chain is Formyl-CoA:oxalate CoA-transferase, found in Bradyrhizobium diazoefficiens (strain JCM 10833 / BCRC 13528 / IAM 13628 / NBRC 14792 / USDA 110).